We begin with the raw amino-acid sequence, 572 residues long: Methionine--tRNA ligase (572 aa).

A 'HIGH' region motif is present at residues 11-21; the sequence is PYINGIKHLGN. The Zn(2+) site is built by C143, C146, C156, and C159. The 'KMSKS' region signature appears at 346-350; it reads QFSTS. T349 serves as a coordination point for ATP.

This sequence belongs to the class-I aminoacyl-tRNA synthetase family. MetG type 1 subfamily. As to quaternary structure, monomer. The cofactor is Zn(2+).

The protein localises to the cytoplasm. It catalyses the reaction tRNA(Met) + L-methionine + ATP = L-methionyl-tRNA(Met) + AMP + diphosphate. Is required not only for elongation of protein synthesis but also for the initiation of all mRNA translation through initiator tRNA(fMet) aminoacylation. In Cereibacter sphaeroides (strain ATCC 17025 / ATH 2.4.3) (Rhodobacter sphaeroides), this protein is Methionine--tRNA ligase.